The chain runs to 93 residues: Large ribosomal subunit protein uL23cz/uL23cy (93 aa).

This sequence belongs to the universal ribosomal protein uL23 family. In terms of assembly, part of the 50S ribosomal subunit.

It is found in the plastid. The protein localises to the chloroplast. Functionally, binds to 23S rRNA. The sequence is that of Large ribosomal subunit protein uL23cz/uL23cy (rpl23-A) from Populus alba (White poplar).